The sequence spans 207 residues: Large ribosomal subunit protein uL4 (207 aa).

The protein belongs to the universal ribosomal protein uL4 family. Part of the 50S ribosomal subunit.

Functionally, one of the primary rRNA binding proteins, this protein initially binds near the 5'-end of the 23S rRNA. It is important during the early stages of 50S assembly. It makes multiple contacts with different domains of the 23S rRNA in the assembled 50S subunit and ribosome. In terms of biological role, forms part of the polypeptide exit tunnel. This is Large ribosomal subunit protein uL4 from Geobacter sulfurreducens (strain ATCC 51573 / DSM 12127 / PCA).